The primary structure comprises 233 residues: Somatolactin (233 aa).

An N-terminal signal peptide occupies residues 1-24; that stretch reads MNMMQVMQSVVWAVLLWPCLVSLG. 3 disulfides stabilise this stretch: cysteine 29/cysteine 39, cysteine 89/cysteine 205, and cysteine 222/cysteine 230.

Belongs to the somatotropin/prolactin family. As to expression, pituitary gland.

Its subcellular location is the secreted. May be associated with ion regulation and reproduction. This chain is Somatolactin, found in Oncorhynchus keta (Chum salmon).